The chain runs to 138 residues: MTKPISRIGSRRNVRIGSRKSGRRIPKGVIHVQASFNNTIVTVTDIRGRVVSWSSAGTCGFRGTRRGTPFAAQTAASNAIRTVVDQGMQRAEVRIKGPGLGRDAALRAIRRSGILLSFVRDVTPMPHNGCRPPKKRRV.

The protein belongs to the universal ribosomal protein uS11 family. Part of the 30S ribosomal subunit.

The protein localises to the plastid. It localises to the chloroplast. This is Small ribosomal subunit protein uS11c from Nandina domestica (Heavenly bamboo).